The primary structure comprises 262 residues: Intron-encoded DNA endonuclease ai2b (262 aa).

It belongs to the LAGLIDADG endonuclease family.

It localises to the mitochondrion. Its function is as follows. Mitochondrial DNA endonuclease involved in intron homing. This chain is Intron-encoded DNA endonuclease ai2b (ai2b), found in Dictyostelium discoideum (Social amoeba).